Reading from the N-terminus, the 88-residue chain is Sapecin-B (88 aa).

The first 24 residues, 1–24 (MKFLTSLLLLFVVVMVSAVNLSMA), serve as a signal peptide directing secretion. Positions 25 to 54 (KESANQLTERLQELDGAAIQEPAELNRHKR) are excised as a propeptide. 3 cysteine pairs are disulfide-bonded: Cys-57–Cys-78, Cys-64–Cys-84, and Cys-68–Cys-86.

The protein belongs to the invertebrate defensin family. Type 1 subfamily. In terms of tissue distribution, hemocytes and fat body.

It localises to the secreted. Sapecins, which are potent bactericidal proteins, are produced in response to injury. Sapecin B is cytotoxic to Gram-positive bacteria. In Sarcophaga peregrina (Flesh fly), this protein is Sapecin-B.